Here is a 512-residue protein sequence, read N- to C-terminus: Hyaluronidase PH-20 (512 aa).

The N-terminal stretch at 1–35 (MGELQFKWLFWRSFAESGGTFQTVLIFLFIPYSLT) is a signal peptide. Intrachain disulfides connect Cys-60/Cys-351 and Cys-223/Cys-237. The N-linked (GlcNAc...) asparagine glycan is linked to Asn-63. Glu-147 acts as the Proton donor in catalysis. Asn-165 and Asn-179 each carry an N-linked (GlcNAc...) asparagine glycan. An N-linked (GlcNAc...) asparagine glycan is attached at Asn-368. 3 disulfides stabilise this stretch: Cys-376–Cys-387, Cys-381–Cys-435, and Cys-437–Cys-464. Asn-408 carries N-linked (GlcNAc...) asparagine glycosylation.

This sequence belongs to the glycosyl hydrolase 56 family.

It is found in the cell membrane. It carries out the reaction Random hydrolysis of (1-&gt;4)-linkages between N-acetyl-beta-D-glucosamine and D-glucuronate residues in hyaluronate.. In terms of biological role, involved in sperm-egg adhesion. Upon fertilization sperm must first penetrate a layer of cumulus cells that surrounds the egg before reaching the zona pellucida. The cumulus cells are embedded in a matrix containing hyaluronic acid which is formed prior to ovulation. This protein aids in penetrating the layer of cumulus cells by digesting hyaluronic acid. The protein is Hyaluronidase PH-20 (Spam1) of Rattus norvegicus (Rat).